Reading from the N-terminus, the 261-residue chain is Kallikrein 1-related peptidase b1 (261 aa).

The N-terminal stretch at 1-18 is a signal peptide; sequence MWFLILFLALSLGGIDAA. Positions 19–24 are cleaved as a propeptide — activation peptide; it reads PPVQSR. The region spanning 25–258 is the Peptidase S1 domain; it reads IVGGFKCEKN…FTSWIKDTLA (234 aa). Disulfide bonds link Cys-31–Cys-173, Cys-50–Cys-66, Cys-152–Cys-219, Cys-184–Cys-198, and Cys-209–Cys-234. The active-site Charge relay system is His-65. Residue Asn-102 is glycosylated (N-linked (GlcNAc...) asparagine). The Charge relay system role is filled by Asp-120. Ser-213 acts as the Charge relay system in catalysis.

Belongs to the peptidase S1 family. Kallikrein subfamily.

It carries out the reaction Preferential cleavage of Arg-|-Xaa bonds in small molecule substrates. Highly selective action to release kallidin (lysyl-bradykinin) from kininogen involves hydrolysis of Met-|-Xaa or Leu-|-Xaa.. In terms of biological role, glandular kallikreins cleave Met-Lys and Arg-Ser bonds in kininogen to release Lys-bradykinin. This Mus musculus (Mouse) protein is Kallikrein 1-related peptidase b1 (Klk1b1).